We begin with the raw amino-acid sequence, 180 residues long: uncharacterized protein (180 aa).

An N-terminal signal peptide occupies residues 1–21; the sequence is MKQCIAFMAILALSLSAISEA. Residues 23-81 are disordered; sequence GGRGVRSSGYSRPVATKPAPAPKQTQTQQQSQQPDATFGQQNMQNTATNTPNNPNNRLA. Low complexity predominate over residues 27–78; the sequence is VRSSGYSRPVATKPAPAPKQTQTQQQSQQPDATFGQQNMQNTATNTPNNPNN.

This is an uncharacterized protein from Pasteurella multocida (strain Pm70).